The primary structure comprises 76 residues: Omega-conotoxin-like TeAr94 (76 aa).

Residues 1 to 22 (MKLTCMMIVAVLFLTAWTFVTA) form the signal peptide. The propeptide occupies 23–50 (VPHSSNALENLYLKAHHEMNNPEDSELN). 3 cysteine pairs are disulfide-bonded: cysteine 53–cysteine 67, cysteine 60–cysteine 71, and cysteine 66–cysteine 75.

It belongs to the conotoxin O1 superfamily. In terms of tissue distribution, expressed by the venom duct.

Its subcellular location is the secreted. Omega-conotoxins act at presynaptic membranes, they bind and block voltage-gated calcium channels. The polypeptide is Omega-conotoxin-like TeAr94 (Conus textile (Cloth-of-gold cone)).